The chain runs to 123 residues: Small ribosomal subunit protein uS12 (123 aa).

A disordered region spans residues 1–21 (MPTIEQLVRKGRQAKPKKSKT). Positions 9-20 (RKGRQAKPKKSK) are enriched in basic residues. Asp89 carries the post-translational modification 3-methylthioaspartic acid.

Belongs to the universal ribosomal protein uS12 family. As to quaternary structure, part of the 30S ribosomal subunit. Contacts proteins S8 and S17. May interact with IF1 in the 30S initiation complex.

With S4 and S5 plays an important role in translational accuracy. In terms of biological role, interacts with and stabilizes bases of the 16S rRNA that are involved in tRNA selection in the A site and with the mRNA backbone. Located at the interface of the 30S and 50S subunits, it traverses the body of the 30S subunit contacting proteins on the other side and probably holding the rRNA structure together. The combined cluster of proteins S8, S12 and S17 appears to hold together the shoulder and platform of the 30S subunit. In Bifidobacterium adolescentis (strain ATCC 15703 / DSM 20083 / NCTC 11814 / E194a), this protein is Small ribosomal subunit protein uS12.